Reading from the N-terminus, the 293-residue chain is Ethanolamine ammonia-lyase small subunit (293 aa).

Val207 and Glu228 together coordinate adenosylcob(III)alamin.

It belongs to the EutC family. As to quaternary structure, the basic unit is a heterodimer which dimerizes to form tetramers. The heterotetramers trimerize; 6 large subunits form a core ring with 6 small subunits projecting outwards. Adenosylcob(III)alamin serves as cofactor.

Its subcellular location is the bacterial microcompartment. The enzyme catalyses ethanolamine = acetaldehyde + NH4(+). It participates in amine and polyamine degradation; ethanolamine degradation. Functionally, catalyzes the deamination of various vicinal amino-alcohols to oxo compounds. Allows this organism to utilize ethanolamine as the sole source of nitrogen and carbon in the presence of external vitamin B12. This chain is Ethanolamine ammonia-lyase small subunit, found in Listeria monocytogenes serovar 1/2a (strain ATCC BAA-679 / EGD-e).